A 206-amino-acid chain; its full sequence is Ribosomal RNA small subunit methyltransferase G (206 aa).

Residues glycine 73, leucine 78, 124 to 125 (VE), and arginine 139 each bind S-adenosyl-L-methionine.

It belongs to the methyltransferase superfamily. RNA methyltransferase RsmG family.

The protein localises to the cytoplasm. The catalysed reaction is guanosine(527) in 16S rRNA + S-adenosyl-L-methionine = N(7)-methylguanosine(527) in 16S rRNA + S-adenosyl-L-homocysteine. Functionally, specifically methylates the N7 position of guanine in position 527 of 16S rRNA. The polypeptide is Ribosomal RNA small subunit methyltransferase G (Pectobacterium atrosepticum (strain SCRI 1043 / ATCC BAA-672) (Erwinia carotovora subsp. atroseptica)).